The primary structure comprises 503 residues: Probable folate-biopterin transporter 6 (503 aa).

12 helical membrane-spanning segments follow: residues 56 to 76, 101 to 121, 128 to 148, 153 to 173, 194 to 214, 221 to 241, 281 to 301, 314 to 334, 344 to 364, 369 to 389, 404 to 424, and 450 to 470; these read SFVLGVVLVYGVNQGFSGSIF, LYYIPWVMRPIWGLFTDVFPI, PYFVVSGVLGLVSAIAIVVLG, ALALSCLLGVSAAMAIADVVI, LCMVCSSAGALVGYATSGVFV, GALGVLAFSPATIVILGFFIY, LYMFISLALNISTHEGHFYWY, FVGIIYAVGALASMFGVLIYH, NILFFAQLLYVFSGMLDLVFI, LTLGIPDSLFVITEESFTKMI, LCPLGIEGTFFAFLMCIDSFG, and WLVILIRNILRLVTVCFVFLV.

Belongs to the major facilitator superfamily. Folate-biopterin transporter (TC 2.A.71) family.

It is found in the membrane. Its function is as follows. Could mediate folate transport. The polypeptide is Probable folate-biopterin transporter 6 (Arabidopsis thaliana (Mouse-ear cress)).